Here is a 125-residue protein sequence, read N- to C-terminus: U-scoloptoxin(05)-Sm1a (125 aa).

The first 20 residues, 1–20 (MNVLYTKIFFILILTRTSSA), serve as a signal peptide directing secretion.

The protein belongs to the scoloptoxin-05 family. Post-translationally, contains 4 disulfide bonds. Expressed by the venom gland.

It is found in the secreted. The sequence is that of U-scoloptoxin(05)-Sm1a from Scolopendra morsitans (Tanzanian blue ringleg centipede).